A 202-amino-acid polypeptide reads, in one-letter code: Thymidylate kinase (202 aa).

Glycine 7–threonine 14 provides a ligand contact to ATP.

This sequence belongs to the thymidylate kinase family.

It catalyses the reaction dTMP + ATP = dTDP + ADP. In terms of biological role, phosphorylation of dTMP to form dTDP in both de novo and salvage pathways of dTTP synthesis. The chain is Thymidylate kinase from Ehrlichia canis (strain Jake).